A 693-amino-acid polypeptide reads, in one-letter code: Elongation factor G (693 aa).

The region spanning 8 to 283 (NRCRNIGIMA…AVVDYLPSPL (276 aa)) is the tr-type G domain. GTP is bound by residues 17–24 (AHIDAGKT), 81–85 (DTPGH), and 135–138 (NKMD).

The protein belongs to the TRAFAC class translation factor GTPase superfamily. Classic translation factor GTPase family. EF-G/EF-2 subfamily.

Its subcellular location is the cytoplasm. Catalyzes the GTP-dependent ribosomal translocation step during translation elongation. During this step, the ribosome changes from the pre-translocational (PRE) to the post-translocational (POST) state as the newly formed A-site-bound peptidyl-tRNA and P-site-bound deacylated tRNA move to the P and E sites, respectively. Catalyzes the coordinated movement of the two tRNA molecules, the mRNA and conformational changes in the ribosome. The polypeptide is Elongation factor G (Acidobacterium capsulatum (strain ATCC 51196 / DSM 11244 / BCRC 80197 / JCM 7670 / NBRC 15755 / NCIMB 13165 / 161)).